A 501-amino-acid polypeptide reads, in one-letter code: Aldehyde dehydrogenase mpl4 (501 aa).

231–236 (GSTASG) lines the NAD(+) pocket. Active-site residues include glutamate 253 and cysteine 287.

It belongs to the aldehyde dehydrogenase family.

It carries out the reaction an aldehyde + NAD(+) + H2O = a carboxylate + NADH + 2 H(+). It functions in the pathway mycotoxin biosynthesis. Aldehyde dehydrogenase; part of the gene cluster that mediates the biosynthesis of the mycotoxin citrinin, a hepato-nephrotoxic compound to humans due to inhibition of respiration complex III. The pathway begins with the synthesis of a keto-aldehyde intermediate by the citrinin PKS (pksCT) from successive condensations of 4 malonyl-CoA units, presumably with a simple acetyl-CoA starter unit. Release of the keto-aldehyde intermediate is consistent with the presence of the C-terminal reductive release domain. Mp11 collaborates with pksCT by catalyzing the hydrolysis of ACP-bound acyl intermediates to free the ACP from stalled intermediates. Mpl2 then catalyzes the oxidation of the C-12 methyl of the ketone intermediate to an alcohol intermediate which is further oxidized by the oxidoreductase mpl7 to produce a bisaldehyde intermediate. The fourth catalytic step is catalyzed by the mpl4 aldehyde dehydrogenase. The final transformation is the reduction of C-3 by mpl6 to provide the chemically stable citrinin nucleus. The sequence is that of Aldehyde dehydrogenase mpl4 from Monascus purpureus (Red mold).